Here is a 165-residue protein sequence, read N- to C-terminus: Alanine- and arginine-rich domain-containing protein (165 aa).

The segment at 136-165 (QQLKKRQDQERASKPQSPQDEEMNPECGNA) is disordered.

The polypeptide is Alanine- and arginine-rich domain-containing protein (Aard) (Rattus norvegicus (Rat)).